We begin with the raw amino-acid sequence, 336 residues long: tRNA N6-adenosine threonylcarbamoyltransferase (336 aa).

2 residues coordinate Fe cation: histidine 111 and histidine 115. Residues 134–138, aspartate 167, glycine 180, aspartate 184, and asparagine 272 each bind substrate; that span reads VVSGG. A Fe cation-binding site is contributed by aspartate 300.

The protein belongs to the KAE1 / TsaD family. Fe(2+) serves as cofactor.

It is found in the cytoplasm. The catalysed reaction is L-threonylcarbamoyladenylate + adenosine(37) in tRNA = N(6)-L-threonylcarbamoyladenosine(37) in tRNA + AMP + H(+). Required for the formation of a threonylcarbamoyl group on adenosine at position 37 (t(6)A37) in tRNAs that read codons beginning with adenine. Is involved in the transfer of the threonylcarbamoyl moiety of threonylcarbamoyl-AMP (TC-AMP) to the N6 group of A37, together with TsaE and TsaB. TsaD likely plays a direct catalytic role in this reaction. The protein is tRNA N6-adenosine threonylcarbamoyltransferase of Caldicellulosiruptor bescii (strain ATCC BAA-1888 / DSM 6725 / KCTC 15123 / Z-1320) (Anaerocellum thermophilum).